A 798-amino-acid polypeptide reads, in one-letter code: Cold shock domain-containing protein E1 (798 aa).

An N-acetylmethionine modification is found at Met-1. Residues 26–87 enclose the CSD 1 domain; that stretch reads ETGVIEKLLT…RTGKPIAVKL (62 aa). Lys-81 is subject to N6-acetyllysine. Residue Lys-91 forms a Glycyl lysine isopeptide (Lys-Gly) (interchain with G-Cter in SUMO2) linkage. Ser-123 carries the phosphoserine modification. In terms of domain architecture, CSD 2; truncated spans 136–179; the sequence is VFYLTYTPEDVEGNVQLETGDKINFVIDNNKHTGAVSARNIMLL. One can recognise a CSD 3 domain in the interval 186–245; that stretch reads CQGVVCAMKEAFGFIERGDVVKEIFFHYSEFKGDLETLQPGDDVEFTIKDRNGKEVATDV. Ser-276 carries the post-translational modification Phosphoserine. In terms of domain architecture, CSD 4; truncated spans 297-337; that stretch reads LPFGDKDTKSKVTLLEGDHVRFNISTDRRDKLERATNIEVL. 2 CSD domains span residues 349 to 410 and 447 to 507; these read EMGV…AIRI and NKGK…ATCV. Ser-514 is subject to Phosphoserine. Positions 519-579 constitute a CSD 7 domain; sequence LLGYVATLKD…KGNKVSAEKV (61 aa). Phosphoserine is present on Ser-584. CSD domains follow at residues 610–670 and 674–735; these read PTQT…AYNI and RRAT…ACNV. Positions 748 to 789 constitute an SUZ-C domain; that stretch reads PRPDRLVNRLKNITLDDASAPRLMVLRQPRGPDNSMGFGAER. Thr-761 bears the Phosphothreonine mark.

Belongs to the UNR family. Component of a multi subunit autoregulatory ribonucleoprotein complex (ARC), at least composed of IGF2BP1, PABPC1 and CSDE1. Interacts with STRAP. Part of a complex associated with the FOS mCRD domain and consisting of PABPC1, PAIP1, HNRPD and SYNCRIP. The interaction with PABPC1 is direct and RNA-independent. Interacts with EIF4ENIF1/4E-T.

Its subcellular location is the cytoplasm. The protein resides in the stress granule. The protein localises to the P-body. RNA-binding protein involved in translationally coupled mRNA turnover. Implicated with other RNA-binding proteins in the cytoplasmic deadenylation/translational and decay interplay of the FOS mRNA mediated by the major coding-region determinant of instability (mCRD) domain. Required for efficient formation of stress granules. Functionally, (Microbial infection) Required for internal initiation of translation of human rhinovirus RNA. The chain is Cold shock domain-containing protein E1 from Homo sapiens (Human).